The following is a 426-amino-acid chain: Cytochrome c biogenesis protein CcsB (426 aa).

Transmembrane regions (helical) follow at residues 11-31 (LRVAIVLLFLIALASAVGTAI), 69-89 (SVWFLSLLAWLGLALILCSWR), and 159-179 (VGPLLVHTGLILLMLGAVWGV).

Belongs to the Ccs1/CcsB family. In terms of assembly, may interact with CcsA.

Its subcellular location is the cellular thylakoid membrane. Functionally, required during biogenesis of c-type cytochromes (cytochrome c6 and cytochrome f) at the step of heme attachment. The chain is Cytochrome c biogenesis protein CcsB from Synechococcus sp. (strain CC9902).